A 145-amino-acid chain; its full sequence is Maximins 3/H9 type 1 (145 aa).

The first 18 residues, 1-18 (MNFKYIVAVSFLIASAYA), serve as a signal peptide directing secretion. 2 propeptides span residues 19-43 (RSVQ…LREI) and 74-124 (RTAE…KEKR). I144 bears the Isoleucine amide mark.

It belongs to the bombinin family. Expressed by the skin glands.

The protein resides in the secreted. Functionally, maximin-3 shows antibacterial activity against both Gram-positive and Gram-negative bacteria. It also shows antimicrobial activity against the fungus C.albicans, but not against A.flavus nor P.uticale. It has little hemolytic activity. It possess a significant cytotoxicity against tumor cell lines. It possess a significant anti-HIV activity. It shows high spermicidal activity. In terms of biological role, maximin-H9 shows antimicrobial activity against bacteria and against the fungus C.albicans. Shows strong hemolytic activity. This Bombina maxima (Giant fire-bellied toad) protein is Maximins 3/H9 type 1.